A 509-amino-acid polypeptide reads, in one-letter code: Carboxysome shell carbonic anhydrase (509 aa).

Residue Cys170 coordinates Zn(2+). Catalysis depends on Asp172, which acts as the Proton acceptor. 2 residues coordinate Zn(2+): His238 and Cys249.

This sequence belongs to the beta-class carbonic anhydrase family. CsoSCA subfamily. As to quaternary structure, homodimer. It depends on Zn(2+) as a cofactor.

It localises to the carboxysome. The enzyme catalyses hydrogencarbonate + H(+) = CO2 + H2O. In terms of biological role, reversible hydration of carbon dioxide. Essential for photosynthetic carbon dioxide fixation, supplies CO(2) to RuBisCO (ribulose bisphosphate carboxylase, cbbL-cbbS) in the carboxysome. There are estimated to be 29 CsoSCA oligomers per carboxysome. This Prochlorococcus marinus subsp. pastoris (strain CCMP1986 / NIES-2087 / MED4) protein is Carboxysome shell carbonic anhydrase.